A 292-amino-acid chain; its full sequence is High-affinity heme uptake system protein IsdE (292 aa).

The first 19 residues, 1-19 (MRIIKYLTILVISVVILTS), serve as a signal peptide directing secretion. C20 is lipidated: N-palmitoyl cysteine. The S-diacylglycerol cysteine moiety is linked to residue C20. The 257-residue stretch at 35 to 291 (RIVPTTVALT…QLYDLFYKDK (257 aa)) folds into the Fe/B12 periplasmic-binding domain. V41, A42, S60, Y61, M78, and H229 together coordinate heme.

Belongs to the bacterial solute-binding protein 8 family. Heme b serves as cofactor.

Its subcellular location is the cell membrane. Involved in heme (porphyrin) scavenging. Binds Fe(2+) and Fe(3+) heme but the largest fraction is Fe(2+) heme. Functions as a high-affinity heme binding protein and probably has a role in relaying heme-iron from cell wall-anchored isd proteins receptors to the probable permease IsdF. The chain is High-affinity heme uptake system protein IsdE (isdE) from Staphylococcus aureus (strain bovine RF122 / ET3-1).